The sequence spans 148 residues: UPF0260 protein YPK_2117 (148 aa).

It belongs to the UPF0260 family.

This chain is UPF0260 protein YPK_2117, found in Yersinia pseudotuberculosis serotype O:3 (strain YPIII).